We begin with the raw amino-acid sequence, 372 residues long: N-methyl-L-tryptophan oxidase (372 aa).

4-34 (DLIIIGSGSVGAAAGYYATRAGLNVLMTDAH) is an FAD binding site. Position 308 is an S-8alpha-FAD cysteine (C308).

The protein belongs to the MSOX/MTOX family. MTOX subfamily. In terms of assembly, monomer. It depends on FAD as a cofactor.

It carries out the reaction N(alpha)-methyl-L-tryptophan + O2 + H2O = L-tryptophan + formaldehyde + H2O2. In terms of biological role, catalyzes the oxidative demethylation of N-methyl-L-tryptophan. This chain is N-methyl-L-tryptophan oxidase, found in Escherichia coli O17:K52:H18 (strain UMN026 / ExPEC).